A 163-amino-acid chain; its full sequence is Probable cyclic pyranopterin monophosphate synthase (163 aa).

The tract at residues 1–23 is disordered; it reads MPDGDDDALTHTTADGDAQMVDV. Substrate-binding positions include 80–82 and 116–117; these read MCH and ME. The active site involves aspartate 131.

This sequence belongs to the MoaC family. Homohexamer; trimer of dimers.

The enzyme catalyses (8S)-3',8-cyclo-7,8-dihydroguanosine 5'-triphosphate = cyclic pyranopterin phosphate + diphosphate. Its pathway is cofactor biosynthesis; molybdopterin biosynthesis. Its function is as follows. Catalyzes the conversion of (8S)-3',8-cyclo-7,8-dihydroguanosine 5'-triphosphate to cyclic pyranopterin monophosphate (cPMP). In Halobacterium salinarum (strain ATCC 29341 / DSM 671 / R1), this protein is Probable cyclic pyranopterin monophosphate synthase.